The following is a 178-amino-acid chain: Ribosome maturation factor RimM (178 aa).

Residues 101–178 (TDEYYWYQLV…VMRVEWDADF (78 aa)) form the PRC barrel domain.

Belongs to the RimM family. Binds ribosomal protein uS19.

Its subcellular location is the cytoplasm. In terms of biological role, an accessory protein needed during the final step in the assembly of 30S ribosomal subunit, possibly for assembly of the head region. Essential for efficient processing of 16S rRNA. May be needed both before and after RbfA during the maturation of 16S rRNA. It has affinity for free ribosomal 30S subunits but not for 70S ribosomes. The protein is Ribosome maturation factor RimM of Pseudomonas entomophila (strain L48).